We begin with the raw amino-acid sequence, 222 residues long: Tetratricopeptide repeat protein 9A (222 aa).

Disordered regions lie at residues 1–49 and 88–116; these read MERK…AAAE and KGLL…GRLS. The TPR 1 repeat unit spans residues 56–89; the sequence is RAHEFKSQGAQCYKDKKFREAIGKYHRALLELKG. The residue at position 105 (Ser-105) is a Phosphoserine. TPR repeat units lie at residues 125–160 and 161–194; these read AIEI…LKKE and GENF…RTQQ.

The protein belongs to the TTC9 family.

In Homo sapiens (Human), this protein is Tetratricopeptide repeat protein 9A (TTC9).